Here is a 183-residue protein sequence, read N- to C-terminus: ADP-ribosylation factor-like protein 1 (183 aa).

A lipid anchor (N-myristoyl glycine) is attached at G2. Residues 25 to 32, 68 to 72, and 127 to 130 contribute to the GTP site; these read GLDGAGKT, DLGGQ, and NKQD.

Belongs to the small GTPase superfamily. Arf family. As to quaternary structure, homodimer. Interacts with IMH1 (via GRIP domain); the interaction is dependent on GTP. Interacts with MON2.

The protein localises to the golgi apparatus. Its function is as follows. Recruits golgins such as IMH1 to the Golgi. Can bind and hydrolyze GTP. May be involved in trafficking events within the endosomal system. This is ADP-ribosylation factor-like protein 1 (ARL1) from Saccharomyces cerevisiae (strain ATCC 204508 / S288c) (Baker's yeast).